Reading from the N-terminus, the 273-residue chain is Progestin and adipoQ receptor family member 4 (273 aa).

The next 6 helical transmembrane spans lie at 52–72, 79–99, 115–135, 147–167, 185–205, and 245–265; these read IYTH…TMPW, GWLG…SVLY, LLAL…LPII, PAAL…ALTA, LLVF…SLPC, and LLSV…LLWA.

Belongs to the ADIPOR family. As to quaternary structure, interacts with CERS2 and CERS5; the interaction regulates CERS2 and CERS5 stabilities and activities and is inhibited in presence of ceramides. As to expression, relatively widely expressed in a range of tissues. Expressed in subcutaneous white adipose tissue.

It is found in the golgi apparatus membrane. Functionally, plays a role in maintaining adipose tissue function through the regulation of ceramide levels. Mediates the stability of ceramide synthetases, CERS2 and CERS5, and their activities. The chain is Progestin and adipoQ receptor family member 4 from Homo sapiens (Human).